A 232-amino-acid chain; its full sequence is MSDPAPEVAPAAPVASPAKAKKEKKPKSDKPKKPKAPRTHPPVSEMVVNAIKTLKERGGSSLQAIKKFLVAQYKVDVEKLAPFIKKYLKGGAVVKGELLQTKGKGASGSFKLPAAAKKEKVAKKPMKATGEKKPKAAAKPKKAGEKKKSIAKKPKAATATKVKKPVAKSTKKQAAVKPAAKKAAPKPKAVPKPKAAKPKKEAKPKKAAAPKAAKKPAQKKPKATKKPAAKKA.

Residues 1–18 (MSDPAPEVAPAAPVASPA) show a composition bias toward low complexity. Disordered regions lie at residues 1 to 44 (MSDP…PPVS) and 103 to 232 (GKGA…AKKA). Positions 39 to 114 (THPPVSEMVV…GASGSFKLPA (76 aa)) constitute an H15 domain. 2 stretches are compositionally biased toward basic residues: residues 149–171 (SIAK…KSTK) and 179–232 (AAKK…AKKA).

This sequence belongs to the histone H1/H5 family.

Its subcellular location is the nucleus. It is found in the chromosome. Its function is as follows. Histones H1 are necessary for the condensation of nucleosome chains into higher-order structures. This chain is Histone H1-II, found in Glyptotendipes barbipes (Midge).